The sequence spans 337 residues: tRNA N6-adenosine threonylcarbamoyltransferase (337 aa).

Fe cation is bound by residues His-111 and His-115. Substrate contacts are provided by residues 134-138, Asp-167, Gly-180, and Asn-272; that span reads LVSGG. Asp-300 contacts Fe cation.

This sequence belongs to the KAE1 / TsaD family. Fe(2+) is required as a cofactor.

The protein localises to the cytoplasm. It carries out the reaction L-threonylcarbamoyladenylate + adenosine(37) in tRNA = N(6)-L-threonylcarbamoyladenosine(37) in tRNA + AMP + H(+). Functionally, required for the formation of a threonylcarbamoyl group on adenosine at position 37 (t(6)A37) in tRNAs that read codons beginning with adenine. Is involved in the transfer of the threonylcarbamoyl moiety of threonylcarbamoyl-AMP (TC-AMP) to the N6 group of A37, together with TsaE and TsaB. TsaD likely plays a direct catalytic role in this reaction. In Escherichia coli O45:K1 (strain S88 / ExPEC), this protein is tRNA N6-adenosine threonylcarbamoyltransferase.